Consider the following 200-residue polypeptide: Imidazole glycerol phosphate synthase subunit HisH (200 aa).

The Glutamine amidotransferase type-1 domain occupies 3 to 200 (DVALIDAGGA…LRNFLEMSFP (198 aa)). C78 serves as the catalytic Nucleophile. Residues H179 and E181 contribute to the active site.

As to quaternary structure, heterodimer of HisH and HisF.

Its subcellular location is the cytoplasm. The enzyme catalyses 5-[(5-phospho-1-deoxy-D-ribulos-1-ylimino)methylamino]-1-(5-phospho-beta-D-ribosyl)imidazole-4-carboxamide + L-glutamine = D-erythro-1-(imidazol-4-yl)glycerol 3-phosphate + 5-amino-1-(5-phospho-beta-D-ribosyl)imidazole-4-carboxamide + L-glutamate + H(+). It catalyses the reaction L-glutamine + H2O = L-glutamate + NH4(+). It participates in amino-acid biosynthesis; L-histidine biosynthesis; L-histidine from 5-phospho-alpha-D-ribose 1-diphosphate: step 5/9. IGPS catalyzes the conversion of PRFAR and glutamine to IGP, AICAR and glutamate. The HisH subunit catalyzes the hydrolysis of glutamine to glutamate and ammonia as part of the synthesis of IGP and AICAR. The resulting ammonia molecule is channeled to the active site of HisF. The chain is Imidazole glycerol phosphate synthase subunit HisH from Xanthomonas axonopodis pv. citri (strain 306).